Here is a 490-residue protein sequence, read N- to C-terminus: Protein nucleotidyltransferase YdiU (490 aa).

Positions 94, 96, 97, 117, 129, 130, 180, and 187 each coordinate ATP. Aspartate 256 (proton acceptor) is an active-site residue. Mg(2+) contacts are provided by asparagine 257 and aspartate 266. ATP is bound at residue aspartate 266.

Belongs to the SELO family. Requires Mg(2+) as cofactor. Mn(2+) is required as a cofactor.

It carries out the reaction L-seryl-[protein] + ATP = 3-O-(5'-adenylyl)-L-seryl-[protein] + diphosphate. The enzyme catalyses L-threonyl-[protein] + ATP = 3-O-(5'-adenylyl)-L-threonyl-[protein] + diphosphate. It catalyses the reaction L-tyrosyl-[protein] + ATP = O-(5'-adenylyl)-L-tyrosyl-[protein] + diphosphate. The catalysed reaction is L-histidyl-[protein] + UTP = N(tele)-(5'-uridylyl)-L-histidyl-[protein] + diphosphate. It carries out the reaction L-seryl-[protein] + UTP = O-(5'-uridylyl)-L-seryl-[protein] + diphosphate. The enzyme catalyses L-tyrosyl-[protein] + UTP = O-(5'-uridylyl)-L-tyrosyl-[protein] + diphosphate. Its function is as follows. Nucleotidyltransferase involved in the post-translational modification of proteins. It can catalyze the addition of adenosine monophosphate (AMP) or uridine monophosphate (UMP) to a protein, resulting in modifications known as AMPylation and UMPylation. The chain is Protein nucleotidyltransferase YdiU from Clostridium perfringens (strain 13 / Type A).